The following is a 59-amino-acid chain: Chromatin protein Cren7 (59 aa).

The protein belongs to the Cren7 family. As to quaternary structure, monomer. Post-translationally, methylated at multiple sites, to varying extents.

The protein resides in the chromosome. It localises to the cytoplasm. In terms of biological role, a chromatin protein, binds double-stranded DNA without sequence specificity. Constrains negative DNA supercoils. In Sulfolobus acidocaldarius (strain ATCC 33909 / DSM 639 / JCM 8929 / NBRC 15157 / NCIMB 11770), this protein is Chromatin protein Cren7.